The primary structure comprises 689 residues: Glycine--tRNA ligase beta subunit (689 aa).

This sequence belongs to the class-II aminoacyl-tRNA synthetase family. In terms of assembly, tetramer of two alpha and two beta subunits.

The protein localises to the cytoplasm. It carries out the reaction tRNA(Gly) + glycine + ATP = glycyl-tRNA(Gly) + AMP + diphosphate. The sequence is that of Glycine--tRNA ligase beta subunit from Shewanella amazonensis (strain ATCC BAA-1098 / SB2B).